The following is a 220-amino-acid chain: Putative O-methyltransferase Mmcs_3995 (220 aa).

S-adenosyl-L-methionine is bound by residues valine 47, glutamate 69, 71–72 (GT), serine 77, aspartate 95, and valine 96. Substrate is bound at residue aspartate 143. Position 145 (aspartate 145) interacts with S-adenosyl-L-methionine.

It belongs to the class I-like SAM-binding methyltransferase superfamily. Cation-dependent O-methyltransferase family.

This Mycobacterium sp. (strain MCS) protein is Putative O-methyltransferase Mmcs_3995.